The sequence spans 122 residues: Selenoprotein H (122 aa).

Lys-20 is subject to N6-acetyllysine. The segment at residues 41 to 44 is a cross-link (cysteinyl-selenocysteine (Cys-Sec); redox-active); that stretch reads CTSU. Sec-44 is a non-standard amino acid (selenocysteine).

It belongs to the SelWTH family.

Its function is as follows. May be involved in a redox-related process. This chain is Selenoprotein H, found in Homo sapiens (Human).